We begin with the raw amino-acid sequence, 333 residues long: Thiamine-monophosphate kinase (333 aa).

Residues D35, T50, and D51 each coordinate Mg(2+). H58 contributes to the substrate binding site. A Mg(2+)-binding site is contributed by D80. ATP contacts are provided by residues Y111, 128 to 129, and R153; that span reads GD. D129 contacts Mg(2+). D230 is a Mg(2+) binding site. Residue S232 coordinates ATP. Position 233 (D233) interacts with Mg(2+). Residues E278 and F330 each coordinate substrate.

Belongs to the thiamine-monophosphate kinase family.

It catalyses the reaction thiamine phosphate + ATP = thiamine diphosphate + ADP. It functions in the pathway cofactor biosynthesis; thiamine diphosphate biosynthesis; thiamine diphosphate from thiamine phosphate: step 1/1. Its function is as follows. Catalyzes the ATP-dependent phosphorylation of thiamine-monophosphate (TMP) to form thiamine-pyrophosphate (TPP), the active form of vitamin B1. The polypeptide is Thiamine-monophosphate kinase (Prochlorococcus marinus (strain SARG / CCMP1375 / SS120)).